We begin with the raw amino-acid sequence, 245 residues long: Fibroblast growth factor 13 (245 aa).

Disordered regions lie at residues methionine 1–asparagine 37 and threonine 213–threonine 245. Residues methionine 1–proline 62 are mediates targeting to the nucleus. Positions phenylalanine 215 to threonine 245 are enriched in polar residues.

Belongs to the heparin-binding growth factors family.

It localises to the cell projection. Its subcellular location is the filopodium. The protein resides in the growth cone. The protein localises to the dendrite. It is found in the cell membrane. It localises to the sarcolemma. Its subcellular location is the cytoplasm. Its function is as follows. Microtubule-binding protein which directly binds tubulin and is involved in both polymerization and stabilization of microtubules. Through its action on microtubules, may participate in the refinement of axons by negatively regulating axonal and leading processes branching. Plays a crucial role in neuron polarization and migration. Regulates voltage-gated sodium channel transport and function. Required for proper head development, it is involved in neural differentiation through regulation of the mek5-erk5 pathway. This chain is Fibroblast growth factor 13 (fgf13), found in Xenopus laevis (African clawed frog).